A 116-amino-acid polypeptide reads, in one-letter code: Secreted RxLR effector protein 9 (116 aa).

Positions Met1–Ala17 are cleaved as a signal peptide. The RxLR-dEER signature appears at Arg49–Arg64.

This sequence belongs to the RxLR effector family.

The protein localises to the secreted. It is found in the host cytoplasm. Its subcellular location is the host nucleus. Its function is as follows. Effector that acts as a broad suppressor of cell death to interrupt plant immunity. Inhibits cell death induced by cell death-inducing proteins, including the PAMP elicitor INF1 from P.infestans. In Plasmopara viticola (Downy mildew of grapevine), this protein is Secreted RxLR effector protein 9.